Here is a 396-residue protein sequence, read N- to C-terminus: MSRSEEIIEVTNHYGAQNYVPLPIVISEAEGVWVKDPEGNKYMDMLSAYSAVNQGHRHPKIIQALKEQADKVTLVSRAFHSENLGEWYEKICKLSGKAKALPMNTGAEAVETALKAARRWAYDVKNIQPDKAEIIAFNGNFHGRTMAPVSLSSEPEYQRGYGPLLDGFRKVDFGDIEAVKAAINENTAAILIEPIQGEAGINVPPEGYLKQIRELCDEHNVLFIADEIQAGLGRSGKLFATDWDNVKPDVYILGKALGGGVLPISVVLADEEVLGVFTPGSHGSTFGGNPLACAVSNAALDVIIDEDLPGRSLELGDYFKSELEKIDHPAIKEVRGRGLFIGIELNEAARPFCESLKEQGLLCKETHDTVIRFAPPLIISKEELDFALDKVRSVFE.

An N6-(pyridoxal phosphate)lysine modification is found at Lys-255.

It belongs to the class-III pyridoxal-phosphate-dependent aminotransferase family. OAT subfamily. Pyridoxal 5'-phosphate is required as a cofactor.

The protein resides in the cytoplasm. It carries out the reaction a 2-oxocarboxylate + L-ornithine = L-glutamate 5-semialdehyde + an L-alpha-amino acid. Its pathway is amino-acid biosynthesis; L-proline biosynthesis; L-glutamate 5-semialdehyde from L-ornithine: step 1/1. In terms of biological role, catalyzes the interconversion of ornithine to glutamate semialdehyde. The chain is Ornithine aminotransferase 2 from Staphylococcus saprophyticus subsp. saprophyticus (strain ATCC 15305 / DSM 20229 / NCIMB 8711 / NCTC 7292 / S-41).